We begin with the raw amino-acid sequence, 968 residues long: Isoleucine--tRNA ligase (968 aa).

A 'HIGH' region motif is present at residues 68–78 (PYANGALHMGH). Glu584 provides a ligand contact to L-isoleucyl-5'-AMP. Residues 625-629 (KMSKS) carry the 'KMSKS' region motif. Lys628 lines the ATP pocket. Residues Cys938, Cys941, Cys958, and Cys961 each coordinate Zn(2+).

Belongs to the class-I aminoacyl-tRNA synthetase family. IleS type 1 subfamily. Monomer. Zn(2+) is required as a cofactor.

It localises to the cytoplasm. The enzyme catalyses tRNA(Ile) + L-isoleucine + ATP = L-isoleucyl-tRNA(Ile) + AMP + diphosphate. In terms of biological role, catalyzes the attachment of isoleucine to tRNA(Ile). As IleRS can inadvertently accommodate and process structurally similar amino acids such as valine, to avoid such errors it has two additional distinct tRNA(Ile)-dependent editing activities. One activity is designated as 'pretransfer' editing and involves the hydrolysis of activated Val-AMP. The other activity is designated 'posttransfer' editing and involves deacylation of mischarged Val-tRNA(Ile). The chain is Isoleucine--tRNA ligase from Prochlorococcus marinus (strain MIT 9313).